The following is a 129-amino-acid chain: Snaclec coagulation factor IX/factor X-binding protein subunit B3 (129 aa).

The signal sequence occupies residues 1 to 8 (LSLSGTAA). Cystine bridges form between C10-C21, C38-C127, and C104-C119. The 112-residue stretch at 17–128 (YEGHCYKPFN…CRMMANFVCE (112 aa)) folds into the C-type lectin domain.

The protein belongs to the snaclec family. As to quaternary structure, heterodimer of subunits A and B3; disulfide-linked. Expressed by the venom gland.

It localises to the secreted. In terms of biological role, anticoagulant protein which binds to the gamma-carboxyglutamic acid-domain regions of factors IX (F9) and factor X (F10) in the presence of calcium with a 1 to 1 stoichiometry. The protein is Snaclec coagulation factor IX/factor X-binding protein subunit B3 of Trimeresurus stejnegeri (Chinese green tree viper).